Here is a 66-residue protein sequence, read N- to C-terminus: Toxin BeM14 (66 aa).

Residues 2–66 enclose the LCN-type CS-alpha/beta domain; that stretch reads RDAYIADDRN…IRKIPGEECR (65 aa). Intrachain disulfides connect Cys12–Cys65, Cys16–Cys36, Cys22–Cys46, and Cys26–Cys48.

This sequence belongs to the long (4 C-C) scorpion toxin superfamily. Sodium channel inhibitor family. Alpha subfamily. Expressed by the venom gland.

The protein resides in the secreted. Alpha toxins bind voltage-independently at site-3 of sodium channels (Nav) and inhibit the inactivation of the activated channels, thereby blocking neuronal transmission. Has paralytic activity in mice. This is Toxin BeM14 from Mesobuthus eupeus (Lesser Asian scorpion).